Reading from the N-terminus, the 592-residue chain is Isocitrate dehydrogenase kinase/phosphatase 1 (592 aa).

ATP contacts are provided by residues 337–343 (APGTPGM) and Lys358. Residue Asp393 is part of the active site.

This sequence belongs to the AceK family.

The protein localises to the cytoplasm. The catalysed reaction is L-seryl-[isocitrate dehydrogenase] + ATP = O-phospho-L-seryl-[isocitrate dehydrogenase] + ADP + H(+). Its function is as follows. Bifunctional enzyme which can phosphorylate or dephosphorylate isocitrate dehydrogenase (IDH) on a specific serine residue. This is a regulatory mechanism which enables bacteria to bypass the Krebs cycle via the glyoxylate shunt in response to the source of carbon. When bacteria are grown on glucose, IDH is fully active and unphosphorylated, but when grown on acetate or ethanol, the activity of IDH declines drastically concomitant with its phosphorylation. The chain is Isocitrate dehydrogenase kinase/phosphatase 1 from Pseudoalteromonas translucida (strain TAC 125).